Reading from the N-terminus, the 490-residue chain is GTPase Der (490 aa).

EngA-type G domains lie at 3–166 (PVVA…MDDV) and 203–376 (IKLA…DSST). GTP-binding positions include 9–16 (GRPNVGKS), 56–60 (DTGGI), 118–121 (NKTD), 209–216 (GRPNVGKS), 256–260 (DTAGV), and 321–324 (NKWD). Positions 377–461 (RRVSTAMLTR…PIRIQFKEGE (85 aa)) constitute a KH-like domain.

It belongs to the TRAFAC class TrmE-Era-EngA-EngB-Septin-like GTPase superfamily. EngA (Der) GTPase family. As to quaternary structure, associates with the 50S ribosomal subunit.

GTPase that plays an essential role in the late steps of ribosome biogenesis. This chain is GTPase Der, found in Salmonella newport (strain SL254).